The sequence spans 689 residues: UvrABC system protein C (689 aa).

Residues 16 to 95 (TNPGVYRFRD…IKEFAPRFNI (80 aa)) enclose the GIY-YIG domain. Residues 208-243 (KPYIRELTRQMNEAAECMDFETAAARRDDVGALERV) form the UVR domain. The interval 316-337 (LAPAASGRRRTARHGSEDVVGQ) is disordered.

This sequence belongs to the UvrC family. In terms of assembly, interacts with UvrB in an incision complex.

It localises to the cytoplasm. Functionally, the UvrABC repair system catalyzes the recognition and processing of DNA lesions. UvrC both incises the 5' and 3' sides of the lesion. The N-terminal half is responsible for the 3' incision and the C-terminal half is responsible for the 5' incision. This is UvrABC system protein C from Kocuria rhizophila (strain ATCC 9341 / DSM 348 / NBRC 103217 / DC2201).